Consider the following 371-residue polypeptide: MAGSDVASEGPSPRDGATRRPGATGGLRSQAAASCPEPLSAAEAPAERGALPAWMRLYFYGMHGITLDVLVSSARRFARSLDLRMLGFSSPYRCLLHSLTHFALEQLYLQRPRCPSAFLFNFLLYPSAHVGLQTLAGQALRLSLGGGPGGAAAPALGALDLALQYVLALYHGQVFLKRFLCLRYPRRRDQHTRDTLPAARDAQILWEAGGQRRGPGGARGTERSPTQGLPDLLRFLFFGMHGFLDEIFFTFFFNVLGQGDRASSGHTSLWSFFMYGSCSFVVEKLYFHLHYSRGWGTWKRVPIYVIFIYAWEFSWGLGLRMCGACSWDYSHYPLNFMGLITLMYLPGWLFLSVYQDLLSNVLWRVQYVPTN.

The disordered stretch occupies residues 1 to 30; it reads MAGSDVASEGPSPRDGATRRPGATGGLRSQ. 6 helical membrane passes run 51 to 71, 117 to 137, 235 to 255, 269 to 289, 301 to 321, and 334 to 354; these read LPAW…DVLV, AFLF…TLAG, FLFF…FFNV, LWSF…YFHL, VPIY…GLRM, and LNFM…LSVY.

It belongs to the TMEM229 family.

The protein resides in the membrane. The protein is Transmembrane protein 229A (Tmem229a) of Mus musculus (Mouse).